A 329-amino-acid polypeptide reads, in one-letter code: Probable nicotianamine synthase 7 (329 aa).

This sequence belongs to the nicotianamine synthase (NAS)-like family.

It carries out the reaction 3 S-adenosyl-L-methionine = nicotianamine + 3 S-methyl-5'-thioadenosine + 3 H(+). Functionally, synthesizes nicotianamine, a polyamine that is the first intermediate in the synthesis of the phytosiderophores of the mugineic acid type found in gramineae which serves as a sensor for the physiological iron status within the plant, and/or might be involved in the transport of iron. This chain is Probable nicotianamine synthase 7 (NAS7), found in Hordeum vulgare (Barley).